Reading from the N-terminus, the 191-residue chain is Peptidyl-tRNA hydrolase (191 aa).

Residue Tyr17 participates in tRNA binding. The active-site Proton acceptor is the His22. Positions 68, 70, and 116 each coordinate tRNA.

The protein belongs to the PTH family. Monomer.

The protein localises to the cytoplasm. The catalysed reaction is an N-acyl-L-alpha-aminoacyl-tRNA + H2O = an N-acyl-L-amino acid + a tRNA + H(+). In terms of biological role, hydrolyzes ribosome-free peptidyl-tRNAs (with 1 or more amino acids incorporated), which drop off the ribosome during protein synthesis, or as a result of ribosome stalling. Catalyzes the release of premature peptidyl moieties from peptidyl-tRNA molecules trapped in stalled 50S ribosomal subunits, and thus maintains levels of free tRNAs and 50S ribosomes. This is Peptidyl-tRNA hydrolase from Mycobacterium avium (strain 104).